We begin with the raw amino-acid sequence, 1530 residues long: MALRDFCSVDGSDLFWEWNVTWNTSNPDFTKCFQNTVLVWVPCSYLWVCFPFYFLYLSHHDRGYIQMTHLNKAKTALGFLLWIVCWADLFYSFWERSMGKLLAPVFLVSPTLLGITMLLATFLIQIERRRGVQSSGIMLTFWLIALLCALAILRSKIMTALKEDARVDVFRDVTFYIYFSLVLIQLVLSCFSDRSPLFSETINDPNPCPESSASFLSRITFWWITGMMVQGYRQPLESTDLWSLNKEDTSEQVVPVLVKNWKKECAKSRKQPVKIVYSSKDPAKPKGSSKVDVNEEAEALIVKCPQKERDPSLFKVLYKTFGPYFLMSFLFKAVHDLMMFAGPEILKLLINFVNDKKAPEWQGYFYTALLFISACLQTLVLHQYFHICFVSGMRIKTAVIGAVYRKALVITNAARKSSTVGEIVNLMSVDAQRFMDLATYINMIWSAPLQVILALYLLWLNLGPSVLAGVAVMVLMVPLNAVMAMKTKTYQVAHMKSKDNRIKLMNEILNGIKVLKLYAWELAFKDKVLAIRQEELKVLKKSAYLAAVGTFTWVCTPFLVALSTFAVYVTVDENNILDAQKAFVSLALFNILRFPLNILPMVISSIVQASVSLKRLRVFLSHEDLDPDSIQRRPIKDAGATNSITVKNATFTWARNDPPTLHGITFSVPEGSLVAVVGQVGCGKSSLLSALLAEMDKVEGHVTVKGSVAYVPQQAWIQNISLRENILFGRQLQERYYKAVVEACALLPDLEILPSGDRTEIGEKGVNLSGGQKQRVSLARAVYCDSDVYLLDDPLSAVDAHVGKHIFENVIGPKGLLKNKTRLLVTHAISYLPQMDVIIVMSGGKISEMGSYQELLARDGAFAEFLRTYASAEQEQGQPEDGLAGVGGPGKEVKQMENGMLVTDTAGKQMQRQLSSSSSYSRDVSQHHTSTAELRKPGPTEETWKLVEADKAQTGQVKLSVYWDYMKAIGLFISFLSIFLFLCNHVASLVSNYWLSLWTDDPIVNGTQEHTQVRLSVYGALGISQGITVFGYSMAVSIGGIFASRRLHLDLLHNVLRSPISFFERTPSGNLVNRFSKELDTVDSMIPQVIKMFMGSLFNVIGACIIILLATPMAAVIIPPLGLIYFFVQRFYVASSRQLKRLESVSRSPVYSHFNETLLGVSVIRAFEEQERFIRQSDLKVDENQKAYYPSIVANRWLAVRLECVGNCIVLFASLFAVISRHSLSAGLVGLSVSYSLQVTTYLNWLVRMSSEMETNIVAVERLKEYSETEKEAPWQIQDMAPPKDWPQVGRVEFRDYGLRYREDLDLVLKHINVTIDGGEKVGIVGRTGAGKSSLTLGLFRIKESAEGEIIIDDINIAKIGLHDLRFKITIIPQDPVLFSGSLRMNLDPFSQYSDEEVWTSLELAHLKGFVSALPDKLNHECAEGGENLSVGQRQLVCLARALLRKTKILVLDEATAAVDLETDDLIQSTIRTQFDDCTVLTIAHRLNTIMDYTRVIVLDKGEIQEWGSPSDLLQQRGLFYSMAKDSGLV.

Over 1–33 (MALRDFCSVDGSDLFWEWNVTWNTSNPDFTKCF) the chain is Extracellular. Asn19 carries an N-linked (GlcNAc...) asparagine glycan. Residues 34-54 (QNTVLVWVPCSYLWVCFPFYF) traverse the membrane as a helical segment. The Cytoplasmic segment spans residues 55–74 (LYLSHHDRGYIQMTHLNKAK). Residues 75–95 (TALGFLLWIVCWADLFYSFWE) form a helical membrane-spanning segment. Residues 96-100 (RSMGK) are Extracellular-facing. A helical transmembrane segment spans residues 101–121 (LLAPVFLVSPTLLGITMLLAT). The Cytoplasmic portion of the chain corresponds to 122–133 (FLIQIERRRGVQ). A helical transmembrane segment spans residues 134 to 154 (SSGIMLTFWLIALLCALAILR). The Extracellular segment spans residues 155-172 (SKIMTALKEDARVDVFRD). The helical transmembrane segment at 173 to 193 (VTFYIYFSLVLIQLVLSCFSD) threads the bilayer. The Cytoplasmic segment spans residues 194–316 (RSPLFSETIN…KERDPSLFKV (123 aa)). The residue at position 277 (Tyr277) is a Phosphotyrosine. Ser289 carries the phosphoserine modification. A helical transmembrane segment spans residues 317–337 (LYKTFGPYFLMSFLFKAVHDL). The 284-residue stretch at 325–608 (FLMSFLFKAV…LPMVISSIVQ (284 aa)) folds into the ABC transmembrane type-1 1 domain. Topologically, residues 338-363 (MMFAGPEILKLLINFVNDKKAPEWQG) are extracellular. Residues 364–384 (YFYTALLFISACLQTLVLHQY) traverse the membrane as a helical segment. Topologically, residues 385–440 (FHICFVSGMRIKTAVIGAVYRKALVITNAARKSSTVGEIVNLMSVDAQRFMDLATY) are cytoplasmic. The helical transmembrane segment at 441–461 (INMIWSAPLQVILALYLLWLN) threads the bilayer. Residues 462 to 464 (LGP) are Extracellular-facing. Residues 465 to 485 (SVLAGVAVMVLMVPLNAVMAM) traverse the membrane as a helical segment. At 486–547 (KTKTYQVAHM…VLKKSAYLAA (62 aa)) the chain is on the cytoplasmic side. Lys503 carries the post-translational modification N6-succinyllysine. A helical transmembrane segment spans residues 548–568 (VGTFTWVCTPFLVALSTFAVY). Residues 569-590 (VTVDENNILDAQKAFVSLALFN) lie on the Extracellular side of the membrane. The chain crosses the membrane as a helical span at residues 591–611 (ILRFPLNILPMVISSIVQASV). Over 612–966 (SLKRLRVFLS…VKLSVYWDYM (355 aa)) the chain is Cytoplasmic. The ABC transporter 1 domain occupies 644–868 (ITVKNATFTW…DGAFAEFLRT (225 aa)). 678 to 685 (GQVGCGKS) lines the ATP pocket. The interval 912-939 (RQLSSSSSYSRDVSQHHTSTAELRKPGP) is disordered. Phosphoserine is present on residues Ser915 and Ser930. A helical transmembrane segment spans residues 967 to 987 (KAIGLFISFLSIFLFLCNHVA). Residues 974 to 1255 (SFLSIFLFLC…LVRMSSEMET (282 aa)) form the ABC transmembrane type-1 2 domain. Residues 988–1024 (SLVSNYWLSLWTDDPIVNGTQEHTQVRLSVYGALGIS) are Extracellular-facing. An N-linked (GlcNAc...) asparagine glycan is attached at Asn1005. The chain crosses the membrane as a helical span at residues 1025-1045 (QGITVFGYSMAVSIGGIFASR). Residues 1046–1088 (RLHLDLLHNVLRSPISFFERTPSGNLVNRFSKELDTVDSMIPQ) are Cytoplasmic-facing. Residues 1089–1109 (VIKMFMGSLFNVIGACIIILL) traverse the membrane as a helical segment. Residue Ala1110 is a topological domain, extracellular. A helical transmembrane segment spans residues 1111-1131 (TPMAAVIIPPLGLIYFFVQRF). Topologically, residues 1132 to 1202 (YVASSRQLKR…VANRWLAVRL (71 aa)) are cytoplasmic. A helical membrane pass occupies residues 1203 to 1223 (ECVGNCIVLFASLFAVISRHS). The Extracellular segment spans residues 1224–1225 (LS). Residues 1226-1246 (AGLVGLSVSYSLQVTTYLNWL) traverse the membrane as a helical segment. Residues 1247-1530 (VRMSSEMETN…YSMAKDSGLV (284 aa)) are Cytoplasmic-facing. The ABC transporter 2 domain maps to 1292 to 1526 (VEFRDYGLRY…RGLFYSMAKD (235 aa)). 1326–1333 (GRTGAGKS) serves as a coordination point for ATP.

Belongs to the ABC transporter superfamily. ABCC family. Conjugate transporter (TC 3.A.1.208) subfamily. In terms of tissue distribution, expressed in heart, spleen, lung, kidney, skeletal muscle, mammary gland and weaker in brain and liver.

It is found in the cell membrane. The protein resides in the basolateral cell membrane. It carries out the reaction ATP + H2O + xenobioticSide 1 = ADP + phosphate + xenobioticSide 2.. The catalysed reaction is an S-substituted glutathione(in) + ATP + H2O = an S-substituted glutathione(out) + ADP + phosphate + H(+). The enzyme catalyses sphing-4-enine 1-phosphate(in) + ATP + H2O = sphing-4-enine 1-phosphate(out) + ADP + phosphate + H(+). It catalyses the reaction leukotriene C4(in) + ATP + H2O = leukotriene C4(out) + ADP + phosphate + H(+). It carries out the reaction 17beta-estradiol 17-O-(beta-D-glucuronate)(in) + ATP + H2O = 17beta-estradiol 17-O-(beta-D-glucuronate)(out) + ADP + phosphate + H(+). The catalysed reaction is daunorubicin(in) + ATP + H2O = daunorubicin(out) + ADP + phosphate + H(+). The enzyme catalyses vincristine(in) + ATP + H2O = vincristine(out) + ADP + phosphate + H(+). It catalyses the reaction 2',3'-cGAMP(in) + ATP + H2O = 2',3'-cGAMP(out) + ADP + phosphate + H(+). It carries out the reaction S-[(2E,6E,10E)-geranylgeranyl]-L-glutathione(in) + ATP + H2O = S-[(2E,6E,10E)-geranylgeranyl]-L-glutathione(out) + ADP + phosphate + H(+). The catalysed reaction is prostaglandin A2-S-(R)-glutathione(in) + ATP + H2O = prostaglandin A2-S-(R)-glutathione(out) + ADP + phosphate + H(+). The enzyme catalyses prostaglandin A2-S-(S)-glutathione(in) + ATP + H2O = prostaglandin A2-S-(S)-glutathione(out) + ADP + phosphate + H(+). MK 571 inhibits sphingosine 1-phosphate and leukotriene C4 export. Mediates export of organic anions and drugs from the cytoplasm. Mediates ATP-dependent transport of glutathione and glutathione conjugates, leukotriene C4, estradiol-17-beta-o-glucuronide, methotrexate, antiviral drugs and other xenobiotics. Confers resistance to anticancer drugs by decreasing accumulation of drug in cells, and by mediating ATP- and GSH-dependent drug export. Hydrolyzes ATP with low efficiency. Catalyzes the export of sphingosine 1-phosphate from mast cells independently of their degranulation. Participates in inflammatory response by allowing export of leukotriene C4 from leukotriene C4-synthesizing cells. Mediates ATP-dependent, GSH-independent cyclic GMP-AMP (cGAMP) export. Thus, by limiting intracellular cGAMP concentrations negatively regulates the cGAS-STING pathway. Exports S-geranylgeranyl-glutathione (GGG) in lymphoid cells and stromal compartments of lymphoid organs. ABCC1 (via extracellular transport) with GGT5 (via GGG catabolism) establish GGG gradients within lymphoid tissues to position P2RY8-positive lymphocytes at germinal centers in lymphoid follicles and restrict their chemotactic transmigration from blood vessels to the bone marrow parenchyma. Mediates basolateral export of GSH-conjugated R- and S-prostaglandin A2 diastereomers in polarized epithelial cells. This Bos taurus (Bovine) protein is Multidrug resistance-associated protein 1.